Here is a 155-residue protein sequence, read N- to C-terminus: Ribosome maturation factor RimP (155 aa).

The protein belongs to the RimP family.

It is found in the cytoplasm. In terms of biological role, required for maturation of 30S ribosomal subunits. In Parabacteroides distasonis (strain ATCC 8503 / DSM 20701 / CIP 104284 / JCM 5825 / NCTC 11152), this protein is Ribosome maturation factor RimP.